The sequence spans 411 residues: Arginine deiminase (411 aa).

C401 (amidino-cysteine intermediate) is an active-site residue.

This sequence belongs to the arginine deiminase family.

It localises to the cytoplasm. The enzyme catalyses L-arginine + H2O = L-citrulline + NH4(+). The protein operates within amino-acid degradation; L-arginine degradation via ADI pathway; carbamoyl phosphate from L-arginine: step 1/2. The protein is Arginine deiminase of Staphylococcus aureus (strain bovine RF122 / ET3-1).